A 343-amino-acid chain; its full sequence is Anthranilate phosphoribosyltransferase (343 aa).

Residues glycine 84, 87-88, threonine 92, 94-97, 112-120, and serine 124 contribute to the 5-phospho-alpha-D-ribose 1-diphosphate site; these read GD, NIST, and KHGNRSVSS. Glycine 84 contributes to the anthranilate binding site. Residue serine 96 coordinates Mg(2+). Asparagine 115 is a binding site for anthranilate. Arginine 170 contributes to the anthranilate binding site. Residues aspartate 229 and glutamate 230 each contribute to the Mg(2+) site.

The protein belongs to the anthranilate phosphoribosyltransferase family. Homodimer. It depends on Mg(2+) as a cofactor.

It carries out the reaction N-(5-phospho-beta-D-ribosyl)anthranilate + diphosphate = 5-phospho-alpha-D-ribose 1-diphosphate + anthranilate. Its pathway is amino-acid biosynthesis; L-tryptophan biosynthesis; L-tryptophan from chorismate: step 2/5. Functionally, catalyzes the transfer of the phosphoribosyl group of 5-phosphorylribose-1-pyrophosphate (PRPP) to anthranilate to yield N-(5'-phosphoribosyl)-anthranilate (PRA). The polypeptide is Anthranilate phosphoribosyltransferase (Stenotrophomonas maltophilia (strain R551-3)).